The sequence spans 1488 residues: Chromosome partition protein MukB (1488 aa).

Residue 34–41 (GGNGAGKS) participates in ATP binding. Coiled coils occupy residues 326 to 418 (LEAD…QYNQ), 444 to 472 (LDTF…QTAH), and 509 to 602 (RHLA…QRAP). A flexible hinge region spans residues 666–783 (PGGAEDQRLN…SLPIFGRAAR (118 aa)). Coiled coils occupy residues 835-923 (EAEI…AKLE), 977-1116 (EMLS…AKAG), and 1209-1265 (VEAI…LQSV). Residues 1049–1074 (ADSGAEERARQRRDELHAQLSNNRSR) are disordered. Positions 1051–1065 (SGAEERARQRRDELH) are enriched in basic and acidic residues.

This sequence belongs to the SMC family. MukB subfamily. In terms of assembly, homodimerization via its hinge domain. Binds to DNA via its C-terminal region. Interacts, and probably forms a ternary complex, with MukE and MukF via its C-terminal region. The complex formation is stimulated by calcium or magnesium. Interacts with tubulin-related protein FtsZ.

The protein resides in the cytoplasm. It localises to the nucleoid. Plays a central role in chromosome condensation, segregation and cell cycle progression. Functions as a homodimer, which is essential for chromosome partition. Involved in negative DNA supercoiling in vivo, and by this means organize and compact chromosomes. May achieve or facilitate chromosome segregation by condensation DNA from both sides of a centrally located replisome during cell division. This is Chromosome partition protein MukB from Salmonella typhimurium (strain LT2 / SGSC1412 / ATCC 700720).